Consider the following 181-residue polypeptide: Protein GrpE (181 aa).

This sequence belongs to the GrpE family. Homodimer.

It localises to the cytoplasm. Its function is as follows. Participates actively in the response to hyperosmotic and heat shock by preventing the aggregation of stress-denatured proteins, in association with DnaK and GrpE. It is the nucleotide exchange factor for DnaK and may function as a thermosensor. Unfolded proteins bind initially to DnaJ; upon interaction with the DnaJ-bound protein, DnaK hydrolyzes its bound ATP, resulting in the formation of a stable complex. GrpE releases ADP from DnaK; ATP binding to DnaK triggers the release of the substrate protein, thus completing the reaction cycle. Several rounds of ATP-dependent interactions between DnaJ, DnaK and GrpE are required for fully efficient folding. This is Protein GrpE from Delftia acidovorans (strain DSM 14801 / SPH-1).